The primary structure comprises 315 residues: ATP synthase gamma chain (315 aa).

This sequence belongs to the ATPase gamma chain family. In terms of assembly, F-type ATPases have 2 components, CF(1) - the catalytic core - and CF(0) - the membrane proton channel. CF(1) has five subunits: alpha(3), beta(3), gamma(1), delta(1), epsilon(1). CF(0) has three main subunits: a, b and c.

The protein localises to the cellular thylakoid membrane. Its function is as follows. Produces ATP from ADP in the presence of a proton gradient across the membrane. The gamma chain is believed to be important in regulating ATPase activity and the flow of protons through the CF(0) complex. The protein is ATP synthase gamma chain of Microcystis aeruginosa (strain NIES-843 / IAM M-2473).